The following is a 260-amino-acid chain: Putative ABC transporter ATP-binding protein (260 aa).

The region spanning 4–243 is the ABC transporter domain; sequence ISMKNVTLKK…QVLENFYESP (240 aa). 36-43 provides a ligand contact to ATP; it reads GLNGSGKT.

It belongs to the ABC transporter superfamily.

The protein is Putative ABC transporter ATP-binding protein (abcX) of Streptococcus mutans serotype c (strain ATCC 700610 / UA159).